The chain runs to 336 residues: Glyceraldehyde-3-phosphate dehydrogenase (336 aa).

NAD(+)-binding positions include 12–13 (RI), D34, R78, and T121. Residues 151 to 153 (SCT), T182, R199, 212 to 213 (TG), and R235 contribute to the D-glyceraldehyde 3-phosphate site. C152 serves as the catalytic Nucleophile. Residue N316 coordinates NAD(+).

This sequence belongs to the glyceraldehyde-3-phosphate dehydrogenase family. Homotetramer.

It localises to the cytoplasm. The enzyme catalyses D-glyceraldehyde 3-phosphate + phosphate + NAD(+) = (2R)-3-phospho-glyceroyl phosphate + NADH + H(+). It functions in the pathway carbohydrate degradation; glycolysis; pyruvate from D-glyceraldehyde 3-phosphate: step 1/5. Catalyzes the oxidative phosphorylation of glyceraldehyde 3-phosphate (G3P) to 1,3-bisphosphoglycerate (BPG) using the cofactor NAD. The first reaction step involves the formation of a hemiacetal intermediate between G3P and a cysteine residue, and this hemiacetal intermediate is then oxidized to a thioester, with concomitant reduction of NAD to NADH. The reduced NADH is then exchanged with the second NAD, and the thioester is attacked by a nucleophilic inorganic phosphate to produce BPG. In Streptococcus pyogenes serotype M1, this protein is Glyceraldehyde-3-phosphate dehydrogenase (gap).